The chain runs to 798 residues: MKFTLSWLKDHLDTTASVDEIAEALTDLGLEVEGIENPAARLAGFTLAHVKSASQHPDADRLRVCVVETNEGEKQIVCGAPNAREGITVVLAKPGDYVPGIDVTLSVGNIRGVESHGMMCSERELELSDEHDGIIELPSGEVGERFIDWLAENDPAKVDPVIEIAITPNRPDALGVAGIARDLAARGIGTLKTRAYAPVPGDFDCPIKVTIDEDTRDGCPLFTGRLIRDVRNGPSPQWLQDQLRAIGLRPISALVDITNYMTYDHNRPLHVFDADKVKGNLRVHRAAGGETLKALDEKEYTFQPGMMVISDDEGAESIAGIMGGDATGCTEETVNVFLESAYWDNVQIALAGRALKINSDARYRFERGVDPAYTLEGLEHATQMILDICGGEASTVVIAGAVPDHSRAYKLDAERVRSLVGMDIPESEQRQTLTRLGFRLEGNMAHVPSWRPDVQGEADLVEEVARIASLTKLVGRPLPRLTDGVPKPVMTPQQRRLSMARRTAASLGYNECVSYTFIDQASAALFGGGTDATMLENPISSEMSHMRPDLLPGLLAAAARNQARGFADLALFEAGPVFHGGEPGEQRAQIAGLLVGRTGPKDVHGAARAVDLYDAKADAEAVLAAMGAPAKVQILRDGDGWWHPGRHGRICLGPKKVLGVFGELHPRVLQAMDVKGPAVAFVLWPEEVPLPRKSGTTRAALALRDLQAVERDFAFVVDAGVEALTLVNAAAGADKALIEDVRVFDEFIGGSLGEGKKSLAITVRLQPTETTLKEKDIEAVSAKIVEKVAKATGGTLRG.

A tRNA-binding domain is found at 39–147 (AARLAGFTLA…PSGEVGERFI (109 aa)). The B5 domain maps to 404–475 (DHSRAYKLDA…RIASLTKLVG (72 aa)). 4 residues coordinate Mg(2+): Asp-453, Asp-459, Glu-462, and Glu-463. An FDX-ACB domain is found at 704-797 (RDLQAVERDF…VAKATGGTLR (94 aa)).

The protein belongs to the phenylalanyl-tRNA synthetase beta subunit family. Type 1 subfamily. In terms of assembly, tetramer of two alpha and two beta subunits. Mg(2+) serves as cofactor.

It is found in the cytoplasm. It carries out the reaction tRNA(Phe) + L-phenylalanine + ATP = L-phenylalanyl-tRNA(Phe) + AMP + diphosphate + H(+). This is Phenylalanine--tRNA ligase beta subunit from Ruegeria pomeroyi (strain ATCC 700808 / DSM 15171 / DSS-3) (Silicibacter pomeroyi).